The sequence spans 251 residues: CDP-diacylglycerol pyrophosphatase (251 aa).

The chain crosses the membrane as a helical span at residues 4–24 (AGLLFLVMIVIAVVAAGIGYW).

It belongs to the Cdh family.

The protein localises to the cell inner membrane. The catalysed reaction is a CDP-1,2-diacyl-sn-glycerol + H2O = a 1,2-diacyl-sn-glycero-3-phosphate + CMP + 2 H(+). It functions in the pathway phospholipid metabolism; CDP-diacylglycerol degradation; phosphatidate from CDP-diacylglycerol: step 1/1. The protein is CDP-diacylglycerol pyrophosphatase of Escherichia coli O81 (strain ED1a).